We begin with the raw amino-acid sequence, 226 residues long: Enolase-phosphatase E1 (226 aa).

This sequence belongs to the HAD-like hydrolase superfamily. MasA/MtnC family. As to quaternary structure, monomer. Mg(2+) serves as cofactor.

It catalyses the reaction 5-methylsulfanyl-2,3-dioxopentyl phosphate + H2O = 1,2-dihydroxy-5-(methylsulfanyl)pent-1-en-3-one + phosphate. Its pathway is amino-acid biosynthesis; L-methionine biosynthesis via salvage pathway; L-methionine from S-methyl-5-thio-alpha-D-ribose 1-phosphate: step 3/6. It participates in amino-acid biosynthesis; L-methionine biosynthesis via salvage pathway; L-methionine from S-methyl-5-thio-alpha-D-ribose 1-phosphate: step 4/6. In terms of biological role, bifunctional enzyme that catalyzes the enolization of 2,3-diketo-5-methylthiopentyl-1-phosphate (DK-MTP-1-P) into the intermediate 2-hydroxy-3-keto-5-methylthiopentenyl-1-phosphate (HK-MTPenyl-1-P), which is then dephosphorylated to form the acireductone 1,2-dihydroxy-3-keto-5-methylthiopentene (DHK-MTPene). The protein is Enolase-phosphatase E1 of Shewanella putrefaciens (strain CN-32 / ATCC BAA-453).